The chain runs to 367 residues: Trans-enoyl reductase ffsC (367 aa).

55–58 (CDWK) lines the NADP(+) pocket. Residue 143–150 (TGIGTLGL) coordinates substrate. NADP(+) is bound by residues 203–206 (SAKN), Tyr-221, and 268–269 (LE). 288–292 (GMAIL) provides a ligand contact to substrate. 357-358 (VS) contacts NADP(+).

Belongs to the zinc-containing alcohol dehydrogenase family. Monomer.

It participates in mycotoxin biosynthesis. Its function is as follows. Trans-enoyl reductase; part of the gene cluster that mediates the biosynthesis of the cytotoxic leucine-containing cytochalasans, including aspochalasin C, aspochalasin E, TMC-169, flavichalasine F, aspergillin PZ, aspochalasin M and flavichalasine G. The first step in the pathway is catalyzed by the hybrid PKS-NRPS ffsA that utilizes 8 units of malonyl-CoA to iteratively assemble the octaketide chain before addition of L-leucine by the C-terminal NRPS modules. Because ffsA lacks a designated enoylreductase (ER) domain, the required activity is provided the enoyl reductase fssC. The methyltransferase (MT) domain of ffsA catalyzes the alpha-methylation at C10 and C14 using S-adenosyl-L-methionine as the methyl-donating cosubstrate. Reduction by the hydrolyase ffsE, followed by dehydration and intra-molecular Diels-Alder cyclization by the Diels-Alderase ffsF then yield the required isoindolone-fused macrocycle. A number of oxidative steps catalyzed by the tailoring cytochrome P450 monooxygenase ffsD, the FAD-linked oxidoreductase ffsJ and the short-chain dehydrogenase/reductase ffsI, are further required to afford the final products. This chain is Trans-enoyl reductase ffsC, found in Aspergillus flavipes.